The sequence spans 175 residues: MGNEERELPNIIICGTPGTGKTTLAEQVAETTELENICIGDVVKENHLHFGFDEKWKTYDVDEDKVLDYLEPKLLKGGCIIDWHTCGLFSEELIDLVVVLRTDHSKLWERLESRGYSLEKIQENNEAEIMQICLEEARESFDPKIVVELPSESIEEMESNLSRITQWVTNWKKNH.

ATP-binding residues include G18, G20, K21, T22, and T23. The NMPbind stretch occupies residues 38 to 61 (CIGDVVKENHLHFGFDEKWKTYDV). Residues 113 to 123 (SRGYSLEKIQE) are LID. Residue R114 coordinates ATP.

This sequence belongs to the adenylate kinase family. AK6 subfamily. In terms of assembly, interacts with small ribosomal subunit protein uS11. Not a structural component of 43S pre-ribosomes, but transiently interacts with them by binding to uS11.

Its subcellular location is the cytoplasm. It localises to the nucleus. The catalysed reaction is AMP + ATP = 2 ADP. It carries out the reaction ATP + H2O = ADP + phosphate + H(+). Broad-specificity nucleoside monophosphate (NMP) kinase that catalyzes the reversible transfer of the terminal phosphate group between nucleoside triphosphates and monophosphates. Also has ATPase activity. Involved in the late cytoplasmic maturation steps of the 40S ribosomal particles, specifically 18S rRNA maturation. While NMP activity is not required for ribosome maturation, ATPase activity is. Associates transiently with small ribosomal subunit protein uS11. ATP hydrolysis breaks the interaction with uS11. May temporarily remove uS11 from the ribosome to enable a conformational change of the ribosomal RNA that is needed for the final maturation step of the small ribosomal subunit. Its NMP activity may have a role in nuclear energy homeostasis. The polypeptide is Adenylate kinase isoenzyme 6 homolog (fap7) (Schizosaccharomyces pombe (strain 972 / ATCC 24843) (Fission yeast)).